The sequence spans 511 residues: 2-isopropylmalate synthase (511 aa).

The Pyruvate carboxyltransferase domain occupies 6 to 269 (IIIFDTTLRD…YTDIKCENIF (264 aa)). Mn(2+) contacts are provided by Asp15, His203, His205, and Asn239. A regulatory domain region spans residues 394 to 511 (VIEKLSVISG…SLKVEERKMA (118 aa)).

This sequence belongs to the alpha-IPM synthase/homocitrate synthase family. LeuA type 1 subfamily. Homodimer. Mn(2+) is required as a cofactor.

It localises to the cytoplasm. It catalyses the reaction 3-methyl-2-oxobutanoate + acetyl-CoA + H2O = (2S)-2-isopropylmalate + CoA + H(+). The protein operates within amino-acid biosynthesis; L-leucine biosynthesis; L-leucine from 3-methyl-2-oxobutanoate: step 1/4. In terms of biological role, catalyzes the condensation of the acetyl group of acetyl-CoA with 3-methyl-2-oxobutanoate (2-ketoisovalerate) to form 3-carboxy-3-hydroxy-4-methylpentanoate (2-isopropylmalate). This is 2-isopropylmalate synthase from Campylobacter jejuni (strain RM1221).